We begin with the raw amino-acid sequence, 217 residues long: Large ribosomal subunit protein uL29m (217 aa).

This sequence belongs to the universal ribosomal protein uL29 family. Component of the mitochondrial large ribosomal subunit. Mature mitochondrial ribosomes consist of a small (37S) and a large (54S) subunit. The 37S subunit contains at least 33 different proteins and 1 molecule of RNA (15S). The 54S subunit contains at least 45 different proteins and 1 molecule of RNA (21S).

Its subcellular location is the mitochondrion. This is Large ribosomal subunit protein uL29m (mrpl4) from Aspergillus clavatus (strain ATCC 1007 / CBS 513.65 / DSM 816 / NCTC 3887 / NRRL 1 / QM 1276 / 107).